The chain runs to 596 residues: Aspartate--tRNA(Asp/Asn) ligase (596 aa).

Glu-175 provides a ligand contact to L-aspartate. The segment at 199–202 is aspartate; that stretch reads QQYK. L-aspartate-binding residues include Arg-221 and His-454. Residue 221–223 participates in ATP binding; that stretch reads RDE. Glu-488 is a binding site for ATP. Arg-495 contacts L-aspartate. 540–543 provides a ligand contact to ATP; sequence GIDR.

The protein belongs to the class-II aminoacyl-tRNA synthetase family. Type 1 subfamily. Homodimer.

The protein localises to the cytoplasm. The catalysed reaction is tRNA(Asx) + L-aspartate + ATP = L-aspartyl-tRNA(Asx) + AMP + diphosphate. Its function is as follows. Aspartyl-tRNA synthetase with relaxed tRNA specificity since it is able to aspartylate not only its cognate tRNA(Asp) but also tRNA(Asn). Reaction proceeds in two steps: L-aspartate is first activated by ATP to form Asp-AMP and then transferred to the acceptor end of tRNA(Asp/Asn). In Rhizobium rhizogenes (strain K84 / ATCC BAA-868) (Agrobacterium radiobacter), this protein is Aspartate--tRNA(Asp/Asn) ligase.